The following is a 493-amino-acid chain: BICD family-like cargo adapter 2 (493 aa).

2 coiled-coil regions span residues 56–275 (ELGK…ELHM) and 365–431 (MQHV…LLST).

It belongs to the BICDR family.

This chain is BICD family-like cargo adapter 2 (bicdl2), found in Xenopus laevis (African clawed frog).